Here is a 45-residue protein sequence, read N- to C-terminus: Large ribosomal subunit protein bL34 (45 aa).

It belongs to the bacterial ribosomal protein bL34 family.

The protein is Large ribosomal subunit protein bL34 of Prochlorococcus marinus (strain MIT 9313).